The sequence spans 622 residues: UvrABC system protein C (622 aa).

Residues 13-92 (DKPGVYLMKN…IKENRPKYNV (80 aa)) form the GIY-YIG domain. In terms of domain architecture, UVR spans 205 to 240 (DELIKKIEEKMKRAAEKMDFEGAAHYRDQRQALLDI).

The protein belongs to the UvrC family. As to quaternary structure, interacts with UvrB in an incision complex.

The protein localises to the cytoplasm. Its function is as follows. The UvrABC repair system catalyzes the recognition and processing of DNA lesions. UvrC both incises the 5' and 3' sides of the lesion. The N-terminal half is responsible for the 3' incision and the C-terminal half is responsible for the 5' incision. The chain is UvrABC system protein C from Alkaliphilus metalliredigens (strain QYMF).